Reading from the N-terminus, the 509-residue chain is Cytochrome P450 monooxygenase cpaH (509 aa).

An N-linked (GlcNAc...) asparagine glycan is attached at asparagine 15. The helical transmembrane segment at 31 to 51 (TTILLIGVTYCILVGIYRVTL) threads the bilayer. 2 N-linked (GlcNAc...) asparagine glycosylation sites follow: asparagine 306 and asparagine 412. Residue cysteine 453 coordinates heme.

Belongs to the cytochrome P450 family. Heme is required as a cofactor.

It is found in the membrane. The protein operates within secondary metabolite biosynthesis. Functionally, cytochrome P450 monooxygenase; part of the gene cluster that mediates the biosynthesis of the fungal neurotoxin cyclopiazonic acid (CPA), a nanomolar inhibitor of Ca(2+)-ATPase with a unique pentacyclic indole tetramic acid scaffold. The hybrid two module polyketide synthase-nonribosomal peptide synthetase (PKS-NRPS) cpaS incorporates acetyl-CoA, malonyl-CoA, and tryptophan (Trp) and utilizes a C-terminal redox-incompetent reductase domain to make and release the tryptophan tetramic acid, cyclo-acetoacetyl-L-tryptophan (c-AATrp), as the first intermediate in the pathway. CpaS catalyzes a Dieckmann-type cyclization on the N-acetoacetyl-Trp intermediate bound in thioester linkage to the phosphopantetheinyl arm of the T domain to form and release c-AATrp. CpaD then regiospecifically dimethylallylates c-AATrp to form beta-cyclopiazonic acid. CpaD discriminates against free Trp but accepts tryptophan-containing thiohydantoins, diketopiperazines, and linear peptides as substrates for C4-prenylation and also acts as a regiospecific O-dimethylallyltransferase (DMAT) on a tyrosine-derived tetramic acid. The beta-cyclopiazonate dehydrogenase cpaO then carries out the dehydrogenation of beta-CPA to yield an unstable enimine product, which is captured by intramolecular cyclization to create the pentacyclic fused scaffold of alpha-cyclopiazonate. Finally, the cytochrome P450 monooxygenase cpaH mediates the conversion of CPA into the less toxic 2-oxocyclopiazonic acid, the end product of the CPA pathway in A.oryza. This Aspergillus oryzae (Yellow koji mold) protein is Cytochrome P450 monooxygenase cpaH.